The sequence spans 198 residues: Cyclin-dependent kinase inhibitor 1B (198 aa).

The segment covering 1–11 (MSNVRVSNGSP) has biased composition (polar residues). The tract at residues 1–22 (MSNVRVSNGSPSLERMDARQAE) is disordered. Ser10 bears the Phosphoserine; by UHMK1 mark. The interval 51–91 (DMEEASQRKWNFDFQNHKPLEGKYEWQEVEKGSLPEFYYRP) is interaction with CDK2. Tyr74 carries the phosphotyrosine; by SRC modification. A disordered region spans residues 87 to 198 (FYYRPPRPPK…KKPGLRRRQT (112 aa)). The residue at position 88 (Tyr88) is a Phosphotyrosine; by ABL, LYN and SRC. A Phosphotyrosine modification is found at Tyr89. Polar residues predominate over residues 104–113 (QESQDVSGNR). A compositionally biased stretch (basic and acidic residues) spans 126–137 (EDTHLVDQKTDT). The Nuclear localization signal motif lies at 153 to 169 (KRPATDDSSPQNKRANR). Thr157 is modified (phosphothreonine; by CaMK1, PKB/AKT1 and PIM1). At Thr170 the chain carries Phosphothreonine. The span at 175–186 (SDGSPNAGSVEQ) shows a compositional bias: polar residues. Residue Thr187 is modified to Phosphothreonine; by PKB/AKT1, CDK1 and CDK2. Thr198 carries the post-translational modification Phosphothreonine; by CaMK1, PKB/AKT1, RPS6KA1, RPS6KA3 and PIM1.

Belongs to the CDI family. As to quaternary structure, forms a ternary complex composed of CCNE1, CDK2 and CDKN1B. Interacts directly with CCNE1; the interaction is inhibited by CDK2-dependent phosphorylation on Thr-187. Interacts with COPS5, subunit of the COP9 signalosome complex; the interaction leads to CDKN1B degradation. Interacts with NUP50; the interaction leads to nuclear import and degradation of phosphorylated CDKN1B. Interacts with CCND1 and SNX6. Interacts (Thr-198-phosphorylated form) with 14-3-3 proteins, binds strongly YWHAQ, weakly YWHAE and YWHAH, but not YWHAB nor YWHAZ; the interaction with YWHAQ results in translocation to the cytoplasm. Interacts with AKT1 and LYN; the interactions lead to cytoplasmic mislocation, phosphorylation of CDKN1B and inhibition of cell cycle arrest. Forms a ternary complex with CCNA2 and CDK2; CDKN1B inhibits the kinase activity of CDK2 through conformational rearrangements. Interacts (unphosphorylated form) with CDK2. Forms a complex with CDK2 and SPDYA, but does not directly interact with SPDYA. Forms a ternary complex composed of cyclin D, CDK4 and CDKN1B. Interacts (phosphorylated on Tyr-88 and Tyr-89) with CDK4; the interaction is required for cyclin D and CDK4 complex assembly, induces nuclear translocation and activates the CDK4 kinase activity. Interacts with GRB2. Interacts with PIM1. Identified in a complex with SKP1, SKP2 and CKS1B. Interacts with UHMK1; the interaction leads to cytoplasmic mislocation, phosphorylation of CDKN1B and inhibition of cell cycle arrest. Also interacts with CDK1. Dephosphorylated on Thr-187 by PPM1H, leading to CDKN1B stability. In terms of processing, phosphorylated; phosphorylation occurs on serine, threonine and tyrosine residues. Phosphorylation on Ser-10 is the major site of phosphorylation in resting cells, takes place at the G(0)-G(1) phase and leads to protein stability. Phosphorylation on other sites is greatly enhanced by mitogens, growth factors, cMYC and in certain cancer cell lines. The phosphorylated form found in the cytoplasm is inactivate. Phosphorylation on Thr-198 is required for interaction with 14-3-3 proteins. Phosphorylation on Thr-187, by CDK1 and CDK2 leads to protein ubiquitination and proteasomal degradation. Tyrosine phosphorylation promotes this process. Phosphorylation by PKB/AKT1 can be suppressed by LY294002, an inhibitor of the catalytic subunit of PI3K. Phosphorylation on Tyr-88 and Tyr-89 has no effect on binding CDK2, but is required for binding CDK4. Dephosphorylated on tyrosine residues by G-CSF. Dephosphorylated on Thr-187 by PPM1H, leading to CDKN1B stability. Ubiquitinated; in the cytoplasm by the KPC complex (composed of RNF123/KPC1 and UBAC1/KPC2) and, in the nucleus, by SCF(SKP2). The latter requires prior phosphorylation on Thr-187. Ubiquitinated; by a TRIM21-containing SCF(SKP2)-like complex; leads to its degradation. Post-translationally, subject to degradation in the lysosome. Interaction with SNX6 promotes lysosomal degradation.

Its subcellular location is the nucleus. The protein localises to the cytoplasm. It localises to the endosome. In terms of biological role, important regulator of cell cycle progression. Inhibits the kinase activity of CDK2 bound to cyclin A, but has little inhibitory activity on CDK2 bound to SPDYA. Involved in G1 arrest. Potent inhibitor of cyclin E- and cyclin A-CDK2 complexes. Forms a complex with cyclin type D-CDK4 complexes and is involved in the assembly, stability, and modulation of CCND1-CDK4 complex activation. Acts either as an inhibitor or an activator of cyclin type D-CDK4 complexes depending on its phosphorylation state and/or stoichometry. The protein is Cyclin-dependent kinase inhibitor 1B (CDKN1B) of Felis catus (Cat).